Consider the following 147-residue polypeptide: Myoglobin (147 aa).

Ala2 carries the N-acetylalanine modification. The 140-residue stretch at 2 to 141 (ADFDAVLKCW…IIADLEANYK (140 aa)) folds into the Globin domain. His60 is a binding site for nitrite. His60 is a binding site for O2. His89 is a heme b binding site.

It belongs to the globin family. As to quaternary structure, monomeric.

The protein resides in the cytoplasm. Its subcellular location is the sarcoplasm. It catalyses the reaction Fe(III)-heme b-[protein] + nitric oxide + H2O = Fe(II)-heme b-[protein] + nitrite + 2 H(+). The catalysed reaction is H2O2 + AH2 = A + 2 H2O. Monomeric heme protein which primary function is to store oxygen and facilitate its diffusion within muscle tissues. Reversibly binds oxygen through a pentacoordinated heme iron and enables its timely and efficient release as needed during periods of heightened demand. Depending on the oxidative conditions of tissues and cells, and in addition to its ability to bind oxygen, it also has a nitrite reductase activity whereby it regulates the production of bioactive nitric oxide. Under stress conditions, like hypoxia and anoxia, it also protects cells against reactive oxygen species thanks to its pseudoperoxidase activity. In Thunnus albacares (Yellowfin tuna), this protein is Myoglobin (mb).